Consider the following 139-residue polypeptide: NADPH-dependent 7-cyano-7-deazaguanine reductase (139 aa).

The active-site Thioimide intermediate is the C34. D41 functions as the Proton donor in the catalytic mechanism. Residues 56–58 (IEL) and 75–76 (HE) each bind substrate.

This sequence belongs to the GTP cyclohydrolase I family. QueF type 1 subfamily.

Its subcellular location is the cytoplasm. The catalysed reaction is 7-aminomethyl-7-carbaguanine + 2 NADP(+) = 7-cyano-7-deazaguanine + 2 NADPH + 3 H(+). The protein operates within tRNA modification; tRNA-queuosine biosynthesis. Catalyzes the NADPH-dependent reduction of 7-cyano-7-deazaguanine (preQ0) to 7-aminomethyl-7-deazaguanine (preQ1). This is NADPH-dependent 7-cyano-7-deazaguanine reductase from Nitrosomonas europaea (strain ATCC 19718 / CIP 103999 / KCTC 2705 / NBRC 14298).